Consider the following 503-residue polypeptide: Cytochrome P450 3A14 (503 aa).

Cysteine 442 contributes to the heme binding site.

This sequence belongs to the cytochrome P450 family. It depends on heme as a cofactor.

It is found in the endoplasmic reticulum membrane. It localises to the microsome membrane. The enzyme catalyses an organic molecule + reduced [NADPH--hemoprotein reductase] + O2 = an alcohol + oxidized [NADPH--hemoprotein reductase] + H2O + H(+). In terms of biological role, cytochromes P450 are a group of heme-thiolate monooxygenases. In liver microsomes, this enzyme is involved in an NADPH-dependent electron transport pathway. It oxidizes a variety of structurally unrelated compounds, including steroids, fatty acids, and xenobiotics. This chain is Cytochrome P450 3A14 (CYP3A14), found in Cavia porcellus (Guinea pig).